We begin with the raw amino-acid sequence, 311 residues long: MANPLYQKHIISINDLSREDLELVLATAAKLKANPQPELLKHKVIASCFFEASTRTRLSFETSMHRLGASVVGFSDSANTSLGKKGETLADTISVISTYVDAIVMRHPQEGAARLATEFSGGVPVLNAGDGANQHPTQTLLDLFTIQETQGRLENLNVAMVGDLKYGRTVHSLTQALAKFSGNRFYFIAPDALAMPQYILDMLDEKGIAWSLHSAIDDVMAEVDILYMTRVQKERLDPSEYANVKAQFVLRAADLEGARANMKVLHPLPRIDEITTDVDKTPHAWYFQQAGNGIFARQALLALVLNSELAL.

Carbamoyl phosphate-binding residues include Arg-55 and Thr-56. Lys-85 serves as a coordination point for L-aspartate. Residues Arg-106, His-135, and Gln-138 each coordinate carbamoyl phosphate. Residues Arg-168 and Arg-230 each coordinate L-aspartate. Positions 268 and 269 each coordinate carbamoyl phosphate.

It belongs to the aspartate/ornithine carbamoyltransferase superfamily. ATCase family. Heterododecamer (2C3:3R2) of six catalytic PyrB chains organized as two trimers (C3), and six regulatory PyrI chains organized as three dimers (R2).

It catalyses the reaction carbamoyl phosphate + L-aspartate = N-carbamoyl-L-aspartate + phosphate + H(+). Its pathway is pyrimidine metabolism; UMP biosynthesis via de novo pathway; (S)-dihydroorotate from bicarbonate: step 2/3. Functionally, catalyzes the condensation of carbamoyl phosphate and aspartate to form carbamoyl aspartate and inorganic phosphate, the committed step in the de novo pyrimidine nucleotide biosynthesis pathway. This chain is Aspartate carbamoyltransferase catalytic subunit, found in Klebsiella pneumoniae (strain 342).